Here is a 311-residue protein sequence, read N- to C-terminus: MFTIKIPATSANLGPGFDSLGLSLQLYNKFTFKRLKSSDIRIKIKEVDTGNIIELPIKDNLIYRAMMYLFERYDVRPEGIELMEEVAIPFARGLGSSATAILGGLFGANIMLGEPLEDEELLKIAVKLEKHPDNVVPALKGGFVINVLKGSDLYYKKINPGEQLRVILCIPEFQLKTEDLRQVLPRQIEFKDAVFNHSRTAFLTSCFYERDWESLRVAMQDRLHQDYRSSLIPGFDEVVKSAYDNGAVGVALSGAGPTVISFAKDKGDKIGEAMVKAFGHYNINSKYIETGLDNKGLILKGHKFSLSGGSR.

89–99 provides a ligand contact to ATP; it reads PFARGLGSSAT.

It belongs to the GHMP kinase family. Homoserine kinase subfamily.

The protein localises to the cytoplasm. The enzyme catalyses L-homoserine + ATP = O-phospho-L-homoserine + ADP + H(+). Its pathway is amino-acid biosynthesis; L-threonine biosynthesis; L-threonine from L-aspartate: step 4/5. Its function is as follows. Catalyzes the ATP-dependent phosphorylation of L-homoserine to L-homoserine phosphate. This is Homoserine kinase from Halothermothrix orenii (strain H 168 / OCM 544 / DSM 9562).